We begin with the raw amino-acid sequence, 261 residues long: tRNA (guanine-N(1)-)-methyltransferase (261 aa).

S-adenosyl-L-methionine-binding positions include glycine 113 and 133 to 138; that span reads IGDYVL.

The protein belongs to the RNA methyltransferase TrmD family. As to quaternary structure, homodimer.

The protein localises to the cytoplasm. The catalysed reaction is guanosine(37) in tRNA + S-adenosyl-L-methionine = N(1)-methylguanosine(37) in tRNA + S-adenosyl-L-homocysteine + H(+). Functionally, specifically methylates guanosine-37 in various tRNAs. The sequence is that of tRNA (guanine-N(1)-)-methyltransferase from Xylella fastidiosa (strain M23).